We begin with the raw amino-acid sequence, 169 residues long: UPF0065 protein in clcB-clcD intergenic region (169 aa).

Belongs to the UPF0065 (bug) family.

It is found in the periplasm. The polypeptide is UPF0065 protein in clcB-clcD intergenic region (Pseudomonas knackmussii (strain DSM 6978 / CCUG 54928 / LMG 23759 / B13)).